We begin with the raw amino-acid sequence, 122 residues long: MSKVFGILLYGSYAKNEYTKRSDIDICLVGVDRNTYLEILGKLGNKYDIKIFEELPLYIKMEIIKNHKVIFGDELELSEHFYKFRKIWRDMEKRIRENQFNSVREKVMLRRRFNAKKEEILG.

The short motif at 11–25 (GSYAKNEYTKRSDID) is the GSX(10)DXD motif element. Mg(2+) is bound by residues Asp23, Asp25, and Asp48.

Belongs to the MntA antitoxin family. As to quaternary structure, probably forms a complex with cognate toxin MJ1548. Requires Mg(2+) as cofactor.

It carries out the reaction L-tyrosyl-[protein] + ATP = O-(5'-adenylyl)-L-tyrosyl-[protein] + diphosphate. The enzyme catalyses O-(5'-adenylyl)-L-tyrosyl-[protein] + ATP = O-[5'-(adenylyl-(5'-&gt;3')-adenylyl)]-L-tyrosyl-[protein] + diphosphate. Functionally, probable antitoxin component of a putative type VII toxin-antitoxin (TA) system. Neutralizes cognate toxic MJ1548 by di-AMPylation. The sequence is that of Putative protein adenylyltransferase MJ1547 from Methanocaldococcus jannaschii (strain ATCC 43067 / DSM 2661 / JAL-1 / JCM 10045 / NBRC 100440) (Methanococcus jannaschii).